An 862-amino-acid chain; its full sequence is DNA mismatch repair protein MutS (862 aa).

ATP is bound at residue 608 to 615; the sequence is GPNMAGKS.

This sequence belongs to the DNA mismatch repair MutS family.

In terms of biological role, this protein is involved in the repair of mismatches in DNA. It is possible that it carries out the mismatch recognition step. This protein has a weak ATPase activity. This Borrelia garinii subsp. bavariensis (strain ATCC BAA-2496 / DSM 23469 / PBi) (Borreliella bavariensis) protein is DNA mismatch repair protein MutS.